The sequence spans 877 residues: MAAERYNPRVAEAHWQKVWEENRTFETDNSDSREKYYVLEMFPYPSGRIHMGHVRNYAMGDVVARYKRAKGFNVLHPMGWDAFGMPAENAAMQNKVHPKEWTYQNIATMKRQLKSMGLSLDWSREFATCDVEYYHRQQMLFIDLYEKGLVTRKTSKVNWDPVDNTVLANEQVVDGRGWRSGALVEQRELTQWFFKITDFSEELLAGLDTLDQWPEKVRLMQRNWIGKSEGLQVRFALAAGTAPAGFSEVEVYTTRPDTLFGAAFVAISADHPLAKKLSEGNAALSSFIEECHQQGTSLAALETAEKKGFDTGIKVKHPFDDNWELPVYVANFVLMEYGTGAVFGCPAHDQRDLDFANKYKLKVTPVVLPKGEDAASFSIGETAYTDDGVMINSRFLDGMTPEAAFNEVASRLEKTDLVGRPQAVRKVQFRLRDWGISRQRYWGCPIPMIHCESCGVNPVPRADLPVKLPDDVEFDRPGNPLDRHATWRHVKCPKCGGDARRETDTMDTFVDSSWYYTRFTAPWENEPTDRKAADHWLPVDQYIGGIEHAILHLLYSRFFTRAMKVAGHVGVDEPFKGLFTQGMVVHETYKANGQWVSPADIRIEEIDGKRVATMLDSGAPVEIGSIEKMSKSKKNVVDPDDIIASYGADIARWFVLSDSPPERDVIWTEAGAEGAHRFVQRIWRLVAEAAPALKDVAPKAGTQGEALGVSKAAHKAVKAVGDDIEKLAFNRGVARLYELVNTLSGALQQAADGKADAEMKGALREATEMLVLMTAPMMPHLAEQCLAELGGKVAGKETLVARAPWPVFDPALVVENEIVLPVQINGKKRGDLTIARDADQASIQQAVLELDFVKAALNGGSPKKIIVVPQRIVNVVA.

Residues 43-53 carry the 'HIGH' region motif; sequence PYPSGRIHMGH. A 'KMSKS' region motif is present at residues 628–632; that stretch reads KMSKS. Position 631 (lysine 631) interacts with ATP.

This sequence belongs to the class-I aminoacyl-tRNA synthetase family.

The protein localises to the cytoplasm. The catalysed reaction is tRNA(Leu) + L-leucine + ATP = L-leucyl-tRNA(Leu) + AMP + diphosphate. The sequence is that of Leucine--tRNA ligase from Brucella suis biovar 1 (strain 1330).